The primary structure comprises 343 residues: Protein RecA (343 aa).

An ATP-binding site is contributed by 66-73 (GPESSGKT).

Belongs to the RecA family.

Its subcellular location is the cytoplasm. Can catalyze the hydrolysis of ATP in the presence of single-stranded DNA, the ATP-dependent uptake of single-stranded DNA by duplex DNA, and the ATP-dependent hybridization of homologous single-stranded DNAs. It interacts with LexA causing its activation and leading to its autocatalytic cleavage. The chain is Protein RecA from Nitrosomonas europaea (strain ATCC 19718 / CIP 103999 / KCTC 2705 / NBRC 14298).